The sequence spans 248 residues: MNLLLLLLTVSLAPTTEAAEIIGGHEADPHSRPYMAYLQYKNEDSRDTICGGFLIREDFVLTAAHCSGSKINVTLGAHNIKEQEKTQQVIPVVKIIPHPAYNAKTISNDIMLLKLKSKAKRTRAVKTLSLPRSNFKVKPGDVCYVAGWGKLGPMGKFPDKLQEVELTVQEDQECETYLKNAYDKANQICAGDPKIKCASFQGDSGGPLVCKKVAAGIVSYGRKDGSTPRAFTKVSTFLSWIEETMKKS.

The first 18 residues, 1 to 18 (MNLLLLLLTVSLAPTTEA), serve as a signal peptide directing secretion. Positions 19–20 (AE) are cleaved as a propeptide — activation peptide. Positions 21 to 246 (IIGGHEADPH…FLSWIEETMK (226 aa)) constitute a Peptidase S1 domain. Cysteines 50 and 66 form a disulfide. The active-site Charge relay system is the His65. Asn72 is a glycosylation site (N-linked (GlcNAc...) asparagine). Asp109 (charge relay system) is an active-site residue. Cystine bridges form between Cys143–Cys210 and Cys174–Cys189. Ser204 acts as the Charge relay system in catalysis.

Belongs to the peptidase S1 family. Granzyme subfamily. In terms of tissue distribution, duodenum.

This enzyme is necessary for target cell lysis in cell-mediated immune responses. The sequence is that of Granzyme-like protein 1 from Rattus norvegicus (Rat).